Reading from the N-terminus, the 256-residue chain is MSSSSSSSAVFPLDHLAAPSPTEQLCYVHCNCCDTILAVGVPCSSLFKTVTVRCGHCANLLSVNLRGLLLPAPAPAPANQLHFGPSLLSPTSPHGLLDEVAFQTPSLLMEQAASASLSSITGRSSSSCASNAPAMQMPPAKPVQQEPELPKNAPASANRPPEKRQRVPSAYNRFIKDEIQRIKAGNPDISHREAFSAAAKNWAHFPHIHFGLMPDQGFKKTFKPQDGSEDILLKDSLYAAAAAAAAAAANMGVTPF.

A C4-type zinc finger spans residues 30–57; that stretch reads CNCCDTILAVGVPCSSLFKTVTVRCGHC. Residues 127–168 are disordered; it reads SCASNAPAMQMPPAKPVQQEPELPKNAPASANRPPEKRQRVP.

It belongs to the YABBY family. In terms of tissue distribution, preferentially expressed in immature organs containing meristems and organ primordia. Expressed in phloem of developing vascular tissues of young seedling shoots. Expressed in the phloem of midvein vasculature of young leaves. Does not show polar expression pattern in leaf primordia.

The protein localises to the nucleus. Functionally, seems to be associated with phloem cell differentiation. This chain is Protein YABBY 4 (YAB4), found in Oryza sativa subsp. japonica (Rice).